A 350-amino-acid polypeptide reads, in one-letter code: Hydroxymethylglutaryl-CoA synthase (350 aa).

Asp30 is a (3S)-3-hydroxy-3-methylglutaryl-CoA binding site. Glu82 (proton donor/acceptor) is an active-site residue. Cys114, Ser155, Thr203, and His236 together coordinate (3S)-3-hydroxy-3-methylglutaryl-CoA. Residue Cys114 is the Acyl-thioester intermediate of the active site. The active-site Proton donor/acceptor is His236. A CoA-binding site is contributed by Arg241. (3S)-3-hydroxy-3-methylglutaryl-CoA is bound by residues Arg245, Asn268, and Ser298.

This sequence belongs to the thiolase-like superfamily. Archaeal HMG-CoA synthase family. As to quaternary structure, interacts with acetoacetyl-CoA thiolase that catalyzes the precedent step in the pathway and with a DUF35 protein. The acetoacetyl-CoA thiolase/HMG-CoA synthase complex channels the intermediate via a fused CoA-binding site, which allows for efficient coupling of the endergonic thiolase reaction with the exergonic HMGCS reaction.

The enzyme catalyses acetoacetyl-CoA + acetyl-CoA + H2O = (3S)-3-hydroxy-3-methylglutaryl-CoA + CoA + H(+). It functions in the pathway metabolic intermediate biosynthesis; (R)-mevalonate biosynthesis; (R)-mevalonate from acetyl-CoA: step 2/3. Catalyzes the condensation of acetyl-CoA with acetoacetyl-CoA to form 3-hydroxy-3-methylglutaryl-CoA (HMG-CoA). Functions in the mevalonate (MVA) pathway leading to isopentenyl diphosphate (IPP), a key precursor for the biosynthesis of isoprenoid compounds that are building blocks of archaeal membrane lipids. In Pyrobaculum aerophilum (strain ATCC 51768 / DSM 7523 / JCM 9630 / CIP 104966 / NBRC 100827 / IM2), this protein is Hydroxymethylglutaryl-CoA synthase.